Consider the following 360-residue polypeptide: Glutamate 5-kinase (360 aa).

K7 contacts ATP. Substrate contacts are provided by S47, D134, and N146. ATP contacts are provided by residues 166–167 (TD) and 210–216 (TGGITTK). Residues 275–348 (VGQITLDEGA…LNKKENINSS (74 aa)) enclose the PUA domain.

It belongs to the glutamate 5-kinase family.

It is found in the cytoplasm. It catalyses the reaction L-glutamate + ATP = L-glutamyl 5-phosphate + ADP. The protein operates within amino-acid biosynthesis; L-proline biosynthesis; L-glutamate 5-semialdehyde from L-glutamate: step 1/2. Its function is as follows. Catalyzes the transfer of a phosphate group to glutamate to form L-glutamate 5-phosphate. The sequence is that of Glutamate 5-kinase from Prochlorococcus marinus subsp. pastoris (strain CCMP1986 / NIES-2087 / MED4).